A 259-amino-acid chain; its full sequence is 5'-nucleotidase SurE (259 aa).

The a divalent metal cation site is built by Asp13, Asp14, Ser44, and Asn101.

The protein belongs to the SurE nucleotidase family. A divalent metal cation serves as cofactor.

It is found in the cytoplasm. It carries out the reaction a ribonucleoside 5'-phosphate + H2O = a ribonucleoside + phosphate. Its function is as follows. Nucleotidase that shows phosphatase activity on nucleoside 5'-monophosphates. The protein is 5'-nucleotidase SurE of Flavobacterium johnsoniae (strain ATCC 17061 / DSM 2064 / JCM 8514 / BCRC 14874 / CCUG 350202 / NBRC 14942 / NCIMB 11054 / UW101) (Cytophaga johnsonae).